We begin with the raw amino-acid sequence, 418 residues long: AP-3 complex subunit mu-1 (418 aa).

Positions 176-417 constitute an MHD domain; sequence NNEAYFDVIE…ITKAGKFQVR (242 aa).

This sequence belongs to the adaptor complexes medium subunit family. In terms of assembly, the AP-3 complex associates with the BLOC-1 complex.

The protein localises to the golgi apparatus. Its subcellular location is the cytoplasmic vesicle membrane. Part of the AP-3 complex, an adaptor-related complex which is not clathrin-associated. The complex is associated with the Golgi region as well as more peripheral structures. It facilitates the budding of vesicles from the Golgi membrane and may be directly involved in trafficking to lysosomes. In concert with the BLOC-1 complex, AP-3 is required to target cargos into vesicles assembled at cell bodies for delivery into neurites and nerve terminals. The chain is AP-3 complex subunit mu-1 (AP3M1) from Gallus gallus (Chicken).